A 747-amino-acid chain; its full sequence is Cysteine--tRNA ligase, cytoplasmic (747 aa).

Residues 1–25 are disordered; that stretch reads MTDSWERGKGRRTQPPWSAPNTQAQ. The segment covering 15-25 has biased composition (polar residues); the sequence is PPWSAPNTQAQ. Zn(2+) is bound at residue cysteine 54. An L-cysteine-binding site is contributed by glycine 55. The 'HIGH' region signature appears at 56–66; it reads PTVYDASHMGH. Residue threonine 95 coordinates L-cysteine. The 'KIIK' region motif lies at 100 to 103; sequence KIIK. The Zn(2+) site is built by cysteine 347, histidine 372, and glutamate 376. An L-cysteine-binding site is contributed by histidine 372. Residues 405–409 carry the 'KMSKS' region motif; it reads KMSKS. Lysine 408 lines the ATP pocket. Basic and acidic residues predominate over residues 651 to 683; it reads EEKRKAEEEKQRKKEEAARKKQQQEAAKLEKMK. The segment at 651 to 722 is disordered; it reads EEKRKAEEEK…KELSKGQSKK (72 aa).

Belongs to the class-I aminoacyl-tRNA synthetase family. In terms of assembly, homodimer. It depends on Zn(2+) as a cofactor.

The protein resides in the cytoplasm. It catalyses the reaction tRNA(Cys) + L-cysteine + ATP = L-cysteinyl-tRNA(Cys) + AMP + diphosphate. In terms of biological role, catalyzes the ATP-dependent ligation of cysteine to tRNA(Cys). The protein is Cysteine--tRNA ligase, cytoplasmic (cars1) of Xenopus tropicalis (Western clawed frog).